The primary structure comprises 324 residues: tRNA pseudouridine synthase B (324 aa).

The active-site Nucleophile is D49. A disordered region spans residues 87–107; sequence RSTDDLEGQPTKTSDKRPSRE.

This sequence belongs to the pseudouridine synthase TruB family. Type 1 subfamily.

The enzyme catalyses uridine(55) in tRNA = pseudouridine(55) in tRNA. In terms of biological role, responsible for synthesis of pseudouridine from uracil-55 in the psi GC loop of transfer RNAs. The protein is tRNA pseudouridine synthase B of Brucella melitensis biotype 1 (strain ATCC 23456 / CCUG 17765 / NCTC 10094 / 16M).